A 416-amino-acid polypeptide reads, in one-letter code: Geranyl diphosphate synthase (416 aa).

Mg(2+) contacts are provided by Asp-157 and Asp-161. Residues 157 to 161 (DDIMD) carry the DDXXD motif motif.

The protein belongs to the FPP/GGPP synthase family. Mg(2+) serves as cofactor. In terms of tissue distribution, specifically expressed in the anterior midgut of male beetles, the site of aggregation pheromone biosynthesis.

The catalysed reaction is isopentenyl diphosphate + dimethylallyl diphosphate = (2E)-geranyl diphosphate + diphosphate. Its pathway is pheromone biosynthesis. Geranyl diphosphate synthase involved in pheromone biosynthesis. This Ips pini (Pine engraver beetle) protein is Geranyl diphosphate synthase.